Consider the following 842-residue polypeptide: Probable vinculin (842 aa).

A coiled-coil region spans residues 585–679 (KEARKRLDDV…AAEEEERKRA (95 aa)).

It belongs to the vinculin/alpha-catenin family. As to quaternary structure, monomer. Associates with F-actin. Interacts with aarA, ctxA, ctxB and rgaA. In terms of tissue distribution, epithelium.

It is found in the cytoplasm. It localises to the cell cortex. The protein localises to the cell junction. In terms of biological role, involved in cell adhesion. Thought to play an important role in cytokinesis B, probably by providing substrate adhesion and traction forces. Required to organize and polarize the tip epithelium during cytokinesis. Required for the normal distribution of myosin in the tip epithelium. Involved in the localization of ctxA, ctxB, dcsA, exoc6 and rgaA. Thought to form a complex with ctxA, ctxB, and rgaA which regulates myosin accumulation to the apical plasma membrane. In Dictyostelium discoideum (Social amoeba), this protein is Probable vinculin (ctnnA).